The sequence spans 764 residues: Nucleolar transcription factor 1 (764 aa).

M1 is subject to N-acetylmethionine. The segment at 1-21 is disordered; sequence MNGEADCPTDLEMAAPKGQDR. 2 consecutive DNA-binding regions (HMG box) follow at residues 112–180 and 196–264; these read PKKP…ARFR and PEKP…RDYI. The residue at position 201 (T201) is a Phosphothreonine. S273, S336, S364, S389, S412, S433, S435, S484, S495, S546, S584, and S638 each carry phosphoserine. The HMG box 3 DNA-binding region spans 298–362; sequence TKPPPNSYSL…DYEVELLRFL (65 aa). The interval 381–411 is disordered; that stretch reads NINKKQATSPASKKPAQEGGKGGSEKPKRPV. 3 DNA-binding regions (HMG box) span residues 407-475, 482-549, and 568-634; these read PKRP…GGER, PESP…SEMR, and KKPP…DLWV. The disordered stretch occupies residues 459–487; that stretch reads REAALKAQSERKPGGEREERGKLPESPKR. Residues 546–576 form a disordered region; sequence SEMRAPPAATNSSKKMKFQGEPKKPPMNGYQ. Residues 648–764 are disordered; the sequence is YISNKRKSMT…SGDSSDSDSN (117 aa). Positions 664–674 are enriched in polar residues; that stretch reads PKSSRTTLQSK. Positions 677–745 are enriched in acidic residues; sequence SEEDDEEDED…DDDEDEDNES (69 aa). Low complexity predominate over residues 746-758; the sequence is EGSSSSSSSSGDS.

In terms of assembly, homodimer. Part of Pol I pre-initiation complex (PIC), in which Pol I core assembles with RRN3 and promoter-bound UTBF and SL1/TIF-IB complex. Interacts with TOP2A in the context of Pol I complex. Interacts with TBP. Interacts with TAF1A. Interacts with RASL11A. Binds to IRS1 and PIK3CA. Interacts with DHX33. Interacts with PHF6. Interacts with CEBPA (isoform 1 and isoform 4). Interacts with DDX11. Interacts with NOP53. Interacts with ALKBH2. In terms of processing, phosphorylated and activated by PIK3CA.

It localises to the nucleus. It is found in the nucleolus. Recognizes the ribosomal RNA gene promoter and activates transcription mediated by RNA polymerase I (Pol I) through cooperative interactions with the transcription factor SL1/TIF-IB complex. It binds specifically to the upstream control element and can activate Pol I promoter escape. The sequence is that of Nucleolar transcription factor 1 (UBTF) from Homo sapiens (Human).